A 611-amino-acid chain; its full sequence is Adenosylhomocysteinase 3 (611 aa).

Composition is skewed to low complexity over residues 1 to 14 (MSVQVVSAAAAAKV), 36 to 57 (AAVGAMAPPAGGGDPEAPAPAA), and 68 to 81 (GPAAALSPAAGKVP). The disordered stretch occupies residues 1 to 184 (MSVQVVSAAA…KQQKNSKGSS (184 aa)). S2 carries the post-translational modification N-acetylserine. Residues 2–109 (SVQVVSAAAA…DGGEALVSPD (108 aa)) form an LISN domain, inhibits interaction with ITPR1 region. At S107 the chain carries Phosphoserine. Positions 135–144 (RPTKIGRRSL) are enriched in basic residues. A compositionally biased stretch (low complexity) spans 145–164 (SRSISQSSTDSYSSAASYTD). Phosphoserine occurs at positions 149, 152, 155, and 158. Substrate-binding residues include T236, D310, and E335. Residue 336 to 338 (SVT) coordinates NAD(+). The substrate site is built by K365 and D369. NAD(+)-binding positions include N370, 401–406 (GEVGKG), E422, N457, 478–479 (MG), and N525.

It belongs to the adenosylhomocysteinase family. Homotetramer. Forms heteromultimers with AHCYL1 (via the C-terminal region). Interacts with ITPR1; with lower affinity than AHCYL1 and maybe via ITPR1. Interacts with SLC4A4. Interacts with ZCCHC4. Requires NAD(+) as cofactor. In terms of processing, phosphorylated during neuronal differentiation at the LISN domain.

The protein localises to the cytoplasm. It localises to the microsome. It catalyses the reaction S-adenosyl-L-homocysteine + H2O = L-homocysteine + adenosine. It functions in the pathway amino-acid biosynthesis; L-homocysteine biosynthesis; L-homocysteine from S-adenosyl-L-homocysteine: step 1/1. Its function is as follows. May regulate the electrogenic sodium/bicarbonate cotransporter SLC4A4 activity and Mg(2+)-sensitivity. On the contrary of its homolog AHCYL1, does not regulate ITPR1 sensitivity to inositol 1,4,5-trisphosphate. This is Adenosylhomocysteinase 3 (AHCYL2) from Homo sapiens (Human).